A 92-amino-acid chain; its full sequence is Small ribosomal subunit protein uS19 (92 aa).

Belongs to the universal ribosomal protein uS19 family.

Its function is as follows. Protein S19 forms a complex with S13 that binds strongly to the 16S ribosomal RNA. The chain is Small ribosomal subunit protein uS19 from Rhodospirillum centenum (strain ATCC 51521 / SW).